The sequence spans 132 residues: Small ribosomal subunit protein uS11 (132 aa).

It belongs to the universal ribosomal protein uS11 family. In terms of assembly, part of the 30S ribosomal subunit. Interacts with proteins S7 and S18. Binds to IF-3.

In terms of biological role, located on the platform of the 30S subunit, it bridges several disparate RNA helices of the 16S rRNA. Forms part of the Shine-Dalgarno cleft in the 70S ribosome. In Chlamydia felis (strain Fe/C-56) (Chlamydophila felis), this protein is Small ribosomal subunit protein uS11.